Here is a 135-residue protein sequence, read N- to C-terminus: Transcriptional regulator HosA (135 aa).

The HTH marR-type domain occupies 4–134; the sequence is RNKAFHQLRQ…FMQLVRKMMN (131 aa). The segment at residues 48-71 is a DNA-binding region (H-T-H motif); that stretch reads QVALIEAAVSTKATLAEMLARMEN.

In terms of biological role, involved in the temperature-dependent positive control of flagellum-driven swimming motility and cellular aggregation. Regulates fliC expression by directly interacting with fliC promoter. The protein is Transcriptional regulator HosA (hosA) of Escherichia coli O111:H-.